The chain runs to 555 residues: Glutamine--tRNA ligase (555 aa).

The short motif at Pro-34–His-44 is the 'HIGH' region element. Residues Glu-35–Asn-37 and His-41–Ser-47 contribute to the ATP site. The L-glutamine site is built by Asp-67 and Tyr-212. Residues Thr-231, Arg-261–Leu-262, and Met-269–Lys-271 contribute to the ATP site. A 'KMSKS' region motif is present at residues Ile-268–Arg-272.

Belongs to the class-I aminoacyl-tRNA synthetase family. Monomer.

Its subcellular location is the cytoplasm. The catalysed reaction is tRNA(Gln) + L-glutamine + ATP = L-glutaminyl-tRNA(Gln) + AMP + diphosphate. This is Glutamine--tRNA ligase from Yersinia pseudotuberculosis serotype O:1b (strain IP 31758).